The primary structure comprises 473 residues: MGRPAPRGSPDSAPPTKGMTGARTAWWVWCVQVATFVVSAVCVTGLLVLASVFRARFPCFYATASSYAGVNSTAEVRGGVAVPLRLDTQSLVGTYVITAVLLLAVAVYAVVGAVTSRYDRALDAGRRLAAARMAMPHATLIAGNVCSWLLQITVLLLAHRISQLAHLVYVLHFACLVYFAAHFCTRGVLSGTYLRQVHGLMELAPTHHRVVGPARAVLTNALLLGVFLCTADAAVSLNTIAAFNFNFSAPGMLICLTVLFAILVVSLLLVVEGVLCHYVRVLVGPHLGAVAATGIVGLACEHYYTNGYYVVETQWPGAQTGVRVALALVAAFALGMAVLRCTRAYLYHRRHHTKFFMRMRDTRHRAHSALKRVRSSMRGSRDGRHRPAPGSPPGIPEYAEDPYAISYGGQLDRYGDSDGEPIYDEVADDQTDVLYAKIQHPRHLPDDDPIYDTVGGYDPEPAEDPVYSTVRRW.

The Intravirion portion of the chain corresponds to Met-1–Gln-32. Residues Val-33–Phe-53 form a helical membrane-spanning segment. Topologically, residues Arg-54 to Ser-90 are virion surface. Residues Leu-91–Val-111 traverse the membrane as a helical segment. Residues Gly-112–His-137 are Intravirion-facing. A helical transmembrane segment spans residues Ala-138 to Ala-158. Over His-159–Gln-163 the chain is Virion surface. The chain crosses the membrane as a helical span at residues Leu-164–Cys-184. Residues Thr-185–Ala-216 lie on the Intravirion side of the membrane. The helical transmembrane segment at Val-217–Leu-237 threads the bilayer. The Virion surface portion of the chain corresponds to Asn-238–Pro-250. The chain crosses the membrane as a helical span at residues Gly-251–Val-271. The Intravirion portion of the chain corresponds to Glu-272–Arg-280. Residues Val-281–Glu-301 traverse the membrane as a helical segment. The Virion surface portion of the chain corresponds to His-302–Ala-318. The chain crosses the membrane as a helical span at residues Gln-319 to Leu-339. The Intravirion segment spans residues Arg-340–Trp-473. Disordered regions lie at residues Lys-371–Ala-399 and His-440–Trp-473.

This sequence belongs to the herpesviridae glycoprotein M family. As to quaternary structure, interacts (via N-terminus) with gN (via N-terminus). The gM-gN heterodimer forms the gCII complex.

Its subcellular location is the virion membrane. The protein resides in the host Golgi apparatus. The protein localises to the host trans-Golgi network. It is found in the host endosome membrane. It localises to the host nucleus inner membrane. Envelope glycoprotein important for virion assembly and egress. Plays a role in the correct incorporation of gH-gL into virion membrane. Directs the glycoprotein N (gN) to the host trans-Golgi network. This is Envelope glycoprotein M from Human herpesvirus 1 (strain 17) (HHV-1).